Here is a 270-residue protein sequence, read N- to C-terminus: Homeobox protein vent1B (270 aa).

Composition is skewed to basic and acidic residues over residues 17–26 and 44–59; these read EEAADGKDSM and YAKE…DVQE. Disordered regions lie at residues 17–66 and 88–134; these read EEAA…SFQC and TWGS…LRTA. A compositionally biased stretch (polar residues) spans 89–99; the sequence is WGSSDEFSSAG. The span at 116–131 shows a compositional bias: basic and acidic residues; the sequence is QDTDHNGKSTKSDRRL. A DNA-binding region (homeobox) is located at residues 128-187; that stretch reads DRRLRTAFSPQQISKLEQAFNKQRYLGASERKKLATSLMLSEIQVKTWFQNRRMKLKRQI.

Expressed in the ventral marginal zone of gastrulae. At the end of gastrulation, predominantly localized to the ventral region of the closing slit blastopore. At early tail bud stage, expression is maintained only in the forming proctodeum.

It localises to the nucleus. Probable transcription regulator. Acts in a ventral signaling pathway downstream of bmp4 and vent2B. This is Homeobox protein vent1B (vent1B) from Xenopus laevis (African clawed frog).